Reading from the N-terminus, the 1192-residue chain is DNA topoisomerase 2 (1192 aa).

Residues Asn-64, Asn-95, and 142–149 (GTNGVGLK) contribute to the ATP site. Mg(2+) contacts are provided by Glu-438, Asp-539, and Asp-541. A Topo IIA-type catalytic domain is found at 707-1174 (IPNFLDGMTR…PGASVWLEEI (468 aa)). The O-(5'-phospho-DNA)-tyrosine intermediate role is filled by Tyr-800.

It belongs to the type II topoisomerase family. The cofactor is Mg(2+). Mn(2+) is required as a cofactor. It depends on Ca(2+) as a cofactor.

It localises to the host cytoplasm. The catalysed reaction is ATP-dependent breakage, passage and rejoining of double-stranded DNA.. Its function is as follows. Type II topoisomerase. Processively relaxes supercoiled DNA. Displays DNA-supercoiling activity only when associated with the viral histone-like protein. This African swine fever virus (strain Badajoz 1971 Vero-adapted) (Ba71V) protein is DNA topoisomerase 2 (TOP).